We begin with the raw amino-acid sequence, 264 residues long: S-adenosylmethionine decarboxylase proenzyme (264 aa).

Ser-113 acts as the Schiff-base intermediate with substrate; via pyruvic acid in catalysis. Ser-113 carries the post-translational modification Pyruvic acid (Ser); by autocatalysis. The active-site Proton acceptor; for processing activity is the His-118. The active-site Proton donor; for catalytic activity is the Cys-141.

This sequence belongs to the prokaryotic AdoMetDC family. Type 2 subfamily. Heterooctamer of four alpha and four beta chains arranged as a tetramer of alpha/beta heterodimers. Pyruvate is required as a cofactor. In terms of processing, is synthesized initially as an inactive proenzyme. Formation of the active enzyme involves a self-maturation process in which the active site pyruvoyl group is generated from an internal serine residue via an autocatalytic post-translational modification. Two non-identical subunits are generated from the proenzyme in this reaction, and the pyruvate is formed at the N-terminus of the alpha chain, which is derived from the carboxyl end of the proenzyme. The post-translation cleavage follows an unusual pathway, termed non-hydrolytic serinolysis, in which the side chain hydroxyl group of the serine supplies its oxygen atom to form the C-terminus of the beta chain, while the remainder of the serine residue undergoes an oxidative deamination to produce ammonia and the pyruvoyl group blocking the N-terminus of the alpha chain.

The catalysed reaction is S-adenosyl-L-methionine + H(+) = S-adenosyl 3-(methylsulfanyl)propylamine + CO2. It participates in amine and polyamine biosynthesis; S-adenosylmethioninamine biosynthesis; S-adenosylmethioninamine from S-adenosyl-L-methionine: step 1/1. In terms of biological role, catalyzes the decarboxylation of S-adenosylmethionine to S-adenosylmethioninamine (dcAdoMet), the propylamine donor required for the synthesis of the polyamines spermine and spermidine from the diamine putrescine. This Xylella fastidiosa (strain 9a5c) protein is S-adenosylmethionine decarboxylase proenzyme.